The following is a 202-amino-acid chain: Large ribosomal subunit protein bL9 (202 aa).

The segment at 177–202 (AGEFFDPEAEPDDVAEAGGEQTAEEK) is disordered. Positions 181–191 (FDPEAEPDDVA) are enriched in acidic residues.

The protein belongs to the bacterial ribosomal protein bL9 family.

Its function is as follows. Binds to the 23S rRNA. This is Large ribosomal subunit protein bL9 from Nitrobacter hamburgensis (strain DSM 10229 / NCIMB 13809 / X14).